The chain runs to 436 residues: MSVSARSAAAEERSVNCSTMAQPKNLEGYVGFANLPNQVYRKSVKRGFEFTLMVVGESGLGKSTLINSLFLTDLYSPEYPGPSHRIKKTVQVEQSKVLIKEGGVQLLLTIVDTPGFGDAVDNSNCWQPVIDYIDSKFEDYLNAESRVNRRQMPDNRVQCCLYFIAPSGHGLKPLDIEFMKRLHEKVNIIPLIAKADTLTPEECQQFKKQIMKEIQGHKIKIYEFPETDDEEENKLVKKIKDRLPLAVVGSNTIIEVNGKRVRGRQYPWGVAEVENGEHCDFTILRNMLIRTHMQDLKDVTNNVHYENYRSRKLAAVTYNGVDNNKNKGQLTKSPLAQMEEERREHVAKMKKMEMEMEQVFEMKVKEKVQKLKDSEAELQRRHEQMKKNLEAQHKELEEKRRQFEEEKANWEAQQRILEQQNSSRTLEKNKKKGKIF.

S2 carries the N-acetylserine modification. Position 29 is a phosphotyrosine (Y29). Residues R46 to A315 form the Septin-type G domain. Residues R46 to V316 are interaction with SEPTIN12. Positions G56–S63 are G1 motif. Residue G56–S63 participates in GTP binding. At S76 the chain carries Phosphoserine. GTP-binding positions include T89, G115, and K194–E202. The tract at residues D112–G115 is G3 motif. Residues A193–D196 form a G4 motif region. The residue at position 227 (T227) is a Phosphothreonine. GTP contacts are provided by G249 and R264. Positions T331 to F436 form a coiled coil. Position 333 is a phosphoserine (S333). K372 bears the N6-acetyllysine mark. Over residues E377 to N409 the composition is skewed to basic and acidic residues. The segment at E377–F436 is disordered. S423 carries the post-translational modification Phosphoserine. The residue at position 425 (T425) is a Phosphothreonine.

The protein belongs to the TRAFAC class TrmE-Era-EngA-EngB-Septin-like GTPase superfamily. Septin GTPase family. Septins polymerize into heterooligomeric protein complexes that form filaments, and associate with cellular membranes, actin filaments and microtubules. GTPase activity is required for filament formation. Filaments are assembled from asymmetrical heterotrimers, composed of SEPTIN2, SEPTIN6 and SEPTIN7 that associate head-to-head to form a hexameric unit. Within the trimer, directly interacts with SEPTIN6, while interaction with SEPTIN2 seems indirect. In the absence of SEPTIN6, forms homodimers. Interacts directly with CENPE and links CENPE to septin filaments composed of SEPTIN2, SEPTIN6 and SEPTIN7. Interacts with SEPTIN5. Component of a septin core octameric complex consisting of SEPTIN12, SEPTIN7, SEPTIN6 and SEPTIN2 or SEPTIN4 in the order 12-7-6-2-2-6-7-12 or 12-7-6-4-4-6-7-12 and located in the sperm annulus; the SEPTIN12:SEPTIN7 association is mediated by the respective GTP-binding domains. Interacts with SEPTIN2, SEPTIN7, SEPTIN8, SEPTIN9 and SEPTIN11.

It localises to the cytoplasm. It is found in the chromosome. The protein localises to the centromere. The protein resides in the kinetochore. Its subcellular location is the cytoskeleton. It localises to the spindle. It is found in the cleavage furrow. The protein localises to the midbody. The protein resides in the cilium axoneme. Its subcellular location is the cell projection. It localises to the cilium. It is found in the flagellum. Its function is as follows. Filament-forming cytoskeletal GTPase. Required for normal organization of the actin cytoskeleton. Required for normal progress through mitosis. Involved in cytokinesis. Required for normal association of CENPE with the kinetochore. Plays a role in ciliogenesis and collective cell movements. Forms a filamentous structure with SEPTIN12, SEPTIN6, SEPTIN2 and probably SEPTIN4 at the sperm annulus which is required for the structural integrity and motility of the sperm tail during postmeiotic differentiation. In Rattus norvegicus (Rat), this protein is Septin-7.